Reading from the N-terminus, the 832-residue chain is Ventricular zone-expressed PH domain-containing protein homolog 1 (832 aa).

An interaction with TGFBR1 region spans residues 201–319 (AELLALMSQL…RYLVSQLANM (119 aa)). The tract at residues 497–519 (DTHGSQLRNSSASHPSIIHSEPE) is disordered. Polar residues predominate over residues 499 to 510 (HGSQLRNSSASH). The tract at residues 663–832 (ESTFPQQKDL…RESREVTTYL (170 aa)) is interaction with TGFBR1. In terms of domain architecture, PH spans 716–818 (QPLIEGKLKE…WLQCINVALA (103 aa)).

Belongs to the MELT/VEPH family. As to quaternary structure, interacts with TGFBR1.

It is found in the cell membrane. In terms of biological role, interacts with TGF-beta receptor type-1 (TGFBR1) and inhibits dissociation of activated SMAD2 from TGFBR1, impeding its nuclear accumulation and resulting in impaired TGF-beta signaling. May also affect FOXO, Hippo and Wnt signaling. In Rattus norvegicus (Rat), this protein is Ventricular zone-expressed PH domain-containing protein homolog 1 (Veph1).